The primary structure comprises 337 residues: Heme A synthase (337 aa).

The next 5 helical transmembrane spans lie at 6–26, 87–107, 119–139, 154–174, and 192–212; these read ITKW…IGGI, FIHR…LIYF, LPYI…WYMV, LAFH…QLIK, and LIFS…GALV. H256 contributes to the heme binding site. Helical transmembrane passes span 258 to 278, 285 to 305, and 308 to 328; these read LGSY…LTIE, IAYF…ITLL, and VPII…SIII. Residue H316 participates in heme binding.

This sequence belongs to the COX15/CtaA family. Type 2 subfamily. As to quaternary structure, interacts with CtaB. Heme b is required as a cofactor.

Its subcellular location is the cell membrane. The catalysed reaction is Fe(II)-heme o + 2 A + H2O = Fe(II)-heme a + 2 AH2. It functions in the pathway porphyrin-containing compound metabolism; heme A biosynthesis; heme A from heme O: step 1/1. Functionally, catalyzes the conversion of heme O to heme A by two successive hydroxylations of the methyl group at C8. The first hydroxylation forms heme I, the second hydroxylation results in an unstable dihydroxymethyl group, which spontaneously dehydrates, resulting in the formyl group of heme A. In Rickettsia akari (strain Hartford), this protein is Heme A synthase.